Reading from the N-terminus, the 343-residue chain is tRNA N6-adenosine threonylcarbamoyltransferase (343 aa).

Fe cation contacts are provided by His116 and His120. Substrate-binding positions include Leu138–Gly142, Asp172, Gly185, Asp189, and Asn277. Asp305 provides a ligand contact to Fe cation.

The protein belongs to the KAE1 / TsaD family. The cofactor is Fe(2+).

It is found in the cytoplasm. The enzyme catalyses L-threonylcarbamoyladenylate + adenosine(37) in tRNA = N(6)-L-threonylcarbamoyladenosine(37) in tRNA + AMP + H(+). In terms of biological role, required for the formation of a threonylcarbamoyl group on adenosine at position 37 (t(6)A37) in tRNAs that read codons beginning with adenine. Is involved in the transfer of the threonylcarbamoyl moiety of threonylcarbamoyl-AMP (TC-AMP) to the N6 group of A37, together with TsaE and TsaB. TsaD likely plays a direct catalytic role in this reaction. The sequence is that of tRNA N6-adenosine threonylcarbamoyltransferase from Mycobacterium ulcerans (strain Agy99).